The following is a 275-amino-acid chain: Large ribosomal subunit protein uL2 (275 aa).

Disordered regions lie at residues 34 to 59 (LEKKSKSGGRNNNGRITTRHIGGGHK) and 223 to 275 (VAMN…RNKK).

This sequence belongs to the universal ribosomal protein uL2 family. As to quaternary structure, part of the 50S ribosomal subunit. Forms a bridge to the 30S subunit in the 70S ribosome.

Its function is as follows. One of the primary rRNA binding proteins. Required for association of the 30S and 50S subunits to form the 70S ribosome, for tRNA binding and peptide bond formation. It has been suggested to have peptidyltransferase activity; this is somewhat controversial. Makes several contacts with the 16S rRNA in the 70S ribosome. The chain is Large ribosomal subunit protein uL2 from Teredinibacter turnerae (strain ATCC 39867 / T7901).